Here is a 120-residue protein sequence, read N- to C-terminus: MRRLPTREVVEMKMVVAVIRPEKLECVKKALEERGFVGMTVTEVKGRGEQKGIRLQFRGREVEVDLLQKTKVEVVVSDDAVDEVVEAIVSSARTGKFGDGRIFVIPVEKSVKIRTGEEEV.

ADP-binding positions include threonine 40, 48–50 (GEQ), valine 75, and 98–101 (GDGR). ATP-binding positions include threonine 40, 48–50 (GEQ), valine 75, and 98–101 (GDGR).

It belongs to the P(II) protein family. As to quaternary structure, homotrimer. Interacts and forms a complex with Amt1.

Its subcellular location is the cytoplasm. Involved in the regulation of nitrogen metabolism. Regulates the activity of its targets by protein-protein interaction in response to the nitrogen status of the cell. Regulates the activity of the ammonia channel Amt1 via direct interaction. The protein is Nitrogen regulatory protein GlnK1 of Archaeoglobus fulgidus (strain ATCC 49558 / DSM 4304 / JCM 9628 / NBRC 100126 / VC-16).